A 494-amino-acid polypeptide reads, in one-letter code: WD repeat-containing protein 37 (494 aa).

Residues methionine 1–leucine 38 form a disordered region. Positions serine 22–serine 31 are enriched in polar residues. WD repeat units follow at residues glycine 154–lysine 194 and glycine 197–glutamine 236. The interval glutamine 236 to aspartate 266 is disordered. Acidic residues predominate over residues glycine 245–alanine 263. WD repeat units follow at residues serine 279–serine 318, glycine 321–valine 360, glycine 365–alanine 403, arginine 406–leucine 445, and glycine 452–glutamate 493.

It localises to the cytoplasm. It is found in the nucleus. The chain is WD repeat-containing protein 37 (wdr37) from Xenopus tropicalis (Western clawed frog).